Reading from the N-terminus, the 314-residue chain is Probable 2-(5''-triphosphoribosyl)-3'-dephosphocoenzyme-A synthase (314 aa).

Belongs to the CitG/MdcB family.

It catalyses the reaction 3'-dephospho-CoA + ATP = 2'-(5''-triphospho-alpha-D-ribosyl)-3'-dephospho-CoA + adenine. This chain is Probable 2-(5''-triphosphoribosyl)-3'-dephosphocoenzyme-A synthase, found in Photobacterium profundum (strain SS9).